The chain runs to 321 residues: Malate dehydrogenase (321 aa).

Residues 13 to 18 (GAGNIG) and Asp38 contribute to the NAD(+) site. Arg87 and Arg93 together coordinate substrate. Residues Asn100 and 123–125 (VTN) each bind NAD(+). Substrate-binding residues include Asn125 and Arg156. Catalysis depends on His180, which acts as the Proton acceptor.

The protein belongs to the LDH/MDH superfamily. MDH type 3 family.

The catalysed reaction is (S)-malate + NAD(+) = oxaloacetate + NADH + H(+). Catalyzes the reversible oxidation of malate to oxaloacetate. This is Malate dehydrogenase from Anaplasma phagocytophilum (strain HZ).